The primary structure comprises 263 residues: HTH-type transcriptional repressor NanR (263 aa).

Residues 1-22 are disordered; the sequence is MGLMNAFDSQTEDSSPAIGRNL. Residues 30-98 form the HTH gntR-type domain; it reads KKLSEMVEEE…NGERARVSRP (69 aa). Positions 58–77 form a DNA-binding region, H-T-H motif; sequence ERELMAFFNVGRPSVREALA.

This sequence belongs to the NanR family.

Its function is as follows. Transcriptional repressor that controls expression of the genes required for the catabolism of sialic acids. The chain is HTH-type transcriptional repressor NanR from Escherichia coli (strain 55989 / EAEC).